The chain runs to 344 residues: MANYTLAPEDEYDVLIEGELESDEAEQCDKYDAQALSAQLVPSLCSAVFVIGVLDNLLVVLILVKYKGLKRVENIYLLNLAVSNLCFLLTLPFWAHAGGDPMCKILIGLYFVGLYSETFFNCLLTVQRYLVFLHKGNFFSARRRVPCGIITSVLAWVTAILATLPEFVVYKPQMEDQKYKCAFSRTPFLPADETFWKHFLTLKMNISVLVLPLFIFTFLYVQMRKTLRFREQRYSLFKLVFAIMVVFLLMWAPYNIAFFLSTFKEHFSLSDCKSSYNLDKSVHITKLIATTHCCINPLLYAFLDGTFSKYLCRCFHLRSNTPLQPRGQSAQGTSREEPDHSTEV.

At methionine 1 to serine 43 the chain is on the extracellular side. A glycan (N-linked (GlcNAc...) asparagine) is linked at asparagine 3. Residues leucine 44–valine 64 traverse the membrane as a helical segment. The Cytoplasmic portion of the chain corresponds to lysine 65 to asparagine 74. The helical transmembrane segment at isoleucine 75–alanine 95 threads the bilayer. Residues histidine 96–lysine 104 are Extracellular-facing. Cysteine 103 and cysteine 181 are joined by a disulfide. A helical transmembrane segment spans residues isoleucine 105–threonine 125. Topologically, residues valine 126–arginine 144 are cytoplasmic. A helical transmembrane segment spans residues valine 145 to proline 165. Topologically, residues glutamate 166–histidine 198 are extracellular. Residues phenylalanine 199–leucine 219 traverse the membrane as a helical segment. The Cytoplasmic portion of the chain corresponds to tyrosine 220 to lysine 238. The chain crosses the membrane as a helical span at residues leucine 239 to phenylalanine 259. Residues leucine 260–lysine 286 are Extracellular-facing. The chain crosses the membrane as a helical span at residues leucine 287–phenylalanine 307. The Cytoplasmic segment spans residues serine 308 to valine 344. Positions glutamine 324–threonine 333 are enriched in polar residues. The tract at residues glutamine 324 to valine 344 is disordered. The segment covering serine 334–valine 344 has biased composition (basic and acidic residues).

Belongs to the G-protein coupled receptor 1 family. In terms of tissue distribution, expressed abundantly in immunal tissues such as spleen, fetal liver, lymph node and bone marrow. Strong expression also in lung and heart. Expressed in almost all hematopoietic cells including monocytes, macrophages, PMNs, T-cells (both CD4+ and CD8+), monocyte-derived iDCs, NK cells, and CD34+ progenitor cells. B-cells expressed isoform 1 but not isoform 2. Up-regulated on synovial neutrophils of rheumatoid arthritis patients.

The protein localises to the cell membrane. Receptor for CCL19 and chemerin/RARRES2. Does not appear to be a signaling receptor, but may have a role in modulating chemokine-triggered immune responses by capturing and internalizing CCL19 or by presenting RARRES2 ligand to CMKLR1, a functional signaling receptors. Plays a critical role for the development of Th2 responses. The protein is C-C chemokine receptor-like 2 (CCRL2) of Homo sapiens (Human).